A 357-amino-acid polypeptide reads, in one-letter code: MAPSHAVRCCQRGLSWIPVIFINLVVCWSYYAYVVELCIYTIPNVNEQVIYLVVFHAFFFMFMWSYWKTISSKPTNPSKEFCLPKAEKELYEKEERPEAQQDILKRVARELPIYTFTGSGAIRYCDRCQLIKPDRCHHCSTCDKCVLKMDHHCPWVNNCVGFSNYKFFVLFLAYSMLYCVYIAATVLQYFIKFWTNQLPDTHAKFHVLFLFFVAAMFFISILSLFSYHLWLVGKNRTTIEAFRAPVFRNGPDKNGFTLGFRKNITQVFGDQKKYWCLPIFSSLGDGYTFPTRLVTVDVEHGNIEHQTIKCTVDGQTNARPLSESQNHLLCNDEGQKDSSMAAIEVCQPVCVTLENES.

Residues 1-14 are Cytoplasmic-facing; sequence MAPSHAVRCCQRGL. A helical membrane pass occupies residues 15–35; sequence SWIPVIFINLVVCWSYYAYVV. Residues 36–50 are Lumenal-facing; it reads ELCIYTIPNVNEQVI. The chain crosses the membrane as a helical span at residues 51–71; that stretch reads YLVVFHAFFFMFMWSYWKTIS. The Cytoplasmic segment spans residues 72–166; sequence SKPTNPSKEF…NNCVGFSNYK (95 aa). The region spanning 123–173 is the DHHC domain; sequence RYCDRCQLIKPDRCHHCSTCDKCVLKMDHHCPWVNNCVGFSNYKFFVLFLA. The active-site S-palmitoyl cysteine intermediate is cysteine 153. The chain crosses the membrane as a helical span at residues 167–187; it reads FFVLFLAYSMLYCVYIAATVL. Residues 188 to 204 lie on the Lumenal side of the membrane; the sequence is QYFIKFWTNQLPDTHAK. The chain crosses the membrane as a helical span at residues 205-228; that stretch reads FHVLFLFFVAAMFFISILSLFSYH. Residues 229 to 357 lie on the Cytoplasmic side of the membrane; sequence LWLVGKNRTT…PVCVTLENES (129 aa).

It belongs to the DHHC palmitoyltransferase family.

It is found in the golgi apparatus membrane. The protein localises to the cell membrane. It localises to the cytoplasm. The protein resides in the perinuclear region. Its subcellular location is the endoplasmic reticulum membrane. It is found in the endoplasmic reticulum-Golgi intermediate compartment membrane. The enzyme catalyses L-cysteinyl-[protein] + hexadecanoyl-CoA = S-hexadecanoyl-L-cysteinyl-[protein] + CoA. It carries out the reaction L-cysteinyl-[protein] + tetradecanoyl-CoA = S-tetradecanoyl-L-cysteinyl-[protein] + CoA. It catalyses the reaction L-cysteinyl-[protein] + octadecanoyl-CoA = S-octadecanoyl-L-cysteinyl-[protein] + CoA. Palmitoyltransferase that could catalyze the addition of palmitate onto various protein substrates. Catalyzes palmitoylation of Cys residues on protein substrates and has a preference for acyl-CoA with C16 fatty acid chains but may also utilize acyl-CoA with C14 and C18 fatty acid chains. The polypeptide is Palmitoyltransferase ZDHHC20-A (Danio rerio (Zebrafish)).